The following is a 147-amino-acid chain: Small ribosomal subunit protein uS12 (147 aa).

The protein belongs to the universal ribosomal protein uS12 family. In terms of assembly, part of the 30S ribosomal subunit.

Its function is as follows. With S4 and S5 plays an important role in translational accuracy. Located at the interface of the 30S and 50S subunits. The polypeptide is Small ribosomal subunit protein uS12 (Pyrobaculum arsenaticum (strain DSM 13514 / JCM 11321 / PZ6)).